The following is a 351-amino-acid chain: Thiamine-phosphate synthase (351 aa).

The segment at 1 to 129 is unknown; that stretch reads MVEPYSQQKQ…GQACKQMRYR (129 aa). The interval 130–351 is thiamine-phosphate synthase; sequence VYSLETNLMG…SQLNRIKPES (222 aa). 4-amino-2-methyl-5-(diphosphooxymethyl)pyrimidine is bound by residues 177–181 and Asn209; that span reads QYRDK. Asp210 and Asp229 together coordinate Mg(2+). Ser248 contributes to the 4-amino-2-methyl-5-(diphosphooxymethyl)pyrimidine binding site. 274 to 276 contacts 2-[(2R,5Z)-2-carboxy-4-methylthiazol-5(2H)-ylidene]ethyl phosphate; sequence TPT. Lys277 is a binding site for 4-amino-2-methyl-5-(diphosphooxymethyl)pyrimidine. Gly304 provides a ligand contact to 2-[(2R,5Z)-2-carboxy-4-methylthiazol-5(2H)-ylidene]ethyl phosphate.

This sequence belongs to the thiamine-phosphate synthase family. Mg(2+) is required as a cofactor.

The catalysed reaction is 2-[(2R,5Z)-2-carboxy-4-methylthiazol-5(2H)-ylidene]ethyl phosphate + 4-amino-2-methyl-5-(diphosphooxymethyl)pyrimidine + 2 H(+) = thiamine phosphate + CO2 + diphosphate. The enzyme catalyses 2-(2-carboxy-4-methylthiazol-5-yl)ethyl phosphate + 4-amino-2-methyl-5-(diphosphooxymethyl)pyrimidine + 2 H(+) = thiamine phosphate + CO2 + diphosphate. It carries out the reaction 4-methyl-5-(2-phosphooxyethyl)-thiazole + 4-amino-2-methyl-5-(diphosphooxymethyl)pyrimidine + H(+) = thiamine phosphate + diphosphate. It participates in cofactor biosynthesis; thiamine diphosphate biosynthesis; thiamine phosphate from 4-amino-2-methyl-5-diphosphomethylpyrimidine and 4-methyl-5-(2-phosphoethyl)-thiazole: step 1/1. Condenses 4-methyl-5-(beta-hydroxyethyl)thiazole monophosphate (THZ-P) and 2-methyl-4-amino-5-hydroxymethyl pyrimidine pyrophosphate (HMP-PP) to form thiamine monophosphate (TMP). In Nostoc sp. (strain PCC 7120 / SAG 25.82 / UTEX 2576), this protein is Thiamine-phosphate synthase.